Here is a 210-residue protein sequence, read N- to C-terminus: Thiamine-phosphate synthase 2 (210 aa).

4-amino-2-methyl-5-(diphosphooxymethyl)pyrimidine contacts are provided by residues 38–42 and Asp70; that span reads QLREK. 2 residues coordinate Mg(2+): Asp71 and Glu90. 4-amino-2-methyl-5-(diphosphooxymethyl)pyrimidine is bound at residue Thr109. 2-[(2R,5Z)-2-carboxy-4-methylthiazol-5(2H)-ylidene]ethyl phosphate is bound at residue 135-137; sequence TTT. Lys138 contacts 4-amino-2-methyl-5-(diphosphooxymethyl)pyrimidine. A 2-[(2R,5Z)-2-carboxy-4-methylthiazol-5(2H)-ylidene]ethyl phosphate-binding site is contributed by Gly165.

This sequence belongs to the thiamine-phosphate synthase family. The cofactor is Mg(2+).

It carries out the reaction 2-[(2R,5Z)-2-carboxy-4-methylthiazol-5(2H)-ylidene]ethyl phosphate + 4-amino-2-methyl-5-(diphosphooxymethyl)pyrimidine + 2 H(+) = thiamine phosphate + CO2 + diphosphate. The enzyme catalyses 2-(2-carboxy-4-methylthiazol-5-yl)ethyl phosphate + 4-amino-2-methyl-5-(diphosphooxymethyl)pyrimidine + 2 H(+) = thiamine phosphate + CO2 + diphosphate. It catalyses the reaction 4-methyl-5-(2-phosphooxyethyl)-thiazole + 4-amino-2-methyl-5-(diphosphooxymethyl)pyrimidine + H(+) = thiamine phosphate + diphosphate. It functions in the pathway cofactor biosynthesis; thiamine diphosphate biosynthesis; thiamine phosphate from 4-amino-2-methyl-5-diphosphomethylpyrimidine and 4-methyl-5-(2-phosphoethyl)-thiazole: step 1/1. In terms of biological role, condenses 4-methyl-5-(beta-hydroxyethyl)thiazole monophosphate (THZ-P) and 2-methyl-4-amino-5-hydroxymethyl pyrimidine pyrophosphate (HMP-PP) to form thiamine monophosphate (TMP). This chain is Thiamine-phosphate synthase 2, found in Streptococcus pneumoniae serotype 4 (strain ATCC BAA-334 / TIGR4).